We begin with the raw amino-acid sequence, 165 residues long: MAKTHFQGNETATSGELPQVGDNLAEFNLVNTELGEVSSKDFQGRKLVLNIFPSVDTGVCATSVRKFNEAAASLENTTVLCISKDLPFALGRFCSAEGIENVTPVSAFRSTFGEDNGIVLEGSPLKGLLARSVIVVDENGKVAYTQLVDEISTEPDYDAALAALN.

In terms of domain architecture, Thioredoxin spans proline 18 to asparagine 165. The active-site Cysteine sulfenic acid (-SOH) intermediate is cysteine 60. An intrachain disulfide couples cysteine 60 to cysteine 94.

Belongs to the peroxiredoxin family. Tpx subfamily. As to quaternary structure, homodimer.

The enzyme catalyses a hydroperoxide + [thioredoxin]-dithiol = an alcohol + [thioredoxin]-disulfide + H2O. Functionally, thiol-specific peroxidase that catalyzes the reduction of hydrogen peroxide and organic hydroperoxides to water and alcohols, respectively. Plays a role in cell protection against oxidative stress by detoxifying peroxides. This chain is Thiol peroxidase, found in Corynebacterium glutamicum (strain ATCC 13032 / DSM 20300 / JCM 1318 / BCRC 11384 / CCUG 27702 / LMG 3730 / NBRC 12168 / NCIMB 10025 / NRRL B-2784 / 534).